The chain runs to 180 residues: NAD(P)H-quinone oxidoreductase subunit I, chloroplastic (180 aa).

2 4Fe-4S ferredoxin-type domains span residues 55–84 and 95–124; these read GRIH…VDWR and LNYS…MTEE. [4Fe-4S] cluster is bound by residues C64, C67, C70, C74, C104, C107, C110, and C114.

It belongs to the complex I 23 kDa subunit family. As to quaternary structure, NDH is composed of at least 16 different subunits, 5 of which are encoded in the nucleus. It depends on [4Fe-4S] cluster as a cofactor.

It is found in the plastid. It localises to the chloroplast thylakoid membrane. It carries out the reaction a plastoquinone + NADH + (n+1) H(+)(in) = a plastoquinol + NAD(+) + n H(+)(out). It catalyses the reaction a plastoquinone + NADPH + (n+1) H(+)(in) = a plastoquinol + NADP(+) + n H(+)(out). In terms of biological role, NDH shuttles electrons from NAD(P)H:plastoquinone, via FMN and iron-sulfur (Fe-S) centers, to quinones in the photosynthetic chain and possibly in a chloroplast respiratory chain. The immediate electron acceptor for the enzyme in this species is believed to be plastoquinone. Couples the redox reaction to proton translocation, and thus conserves the redox energy in a proton gradient. This Hordeum vulgare (Barley) protein is NAD(P)H-quinone oxidoreductase subunit I, chloroplastic.